A 471-amino-acid polypeptide reads, in one-letter code: ATP synthase subunit beta (471 aa).

153 to 160 (GGAGVGKT) is a binding site for ATP.

The protein belongs to the ATPase alpha/beta chains family. In terms of assembly, F-type ATPases have 2 components, CF(1) - the catalytic core - and CF(0) - the membrane proton channel. CF(1) has five subunits: alpha(3), beta(3), gamma(1), delta(1), epsilon(1). CF(0) has four main subunits: a(1), b(1), b'(1) and c(9-12).

It is found in the cell membrane. The enzyme catalyses ATP + H2O + 4 H(+)(in) = ADP + phosphate + 5 H(+)(out). In terms of biological role, produces ATP from ADP in the presence of a proton gradient across the membrane. The catalytic sites are hosted primarily by the beta subunits. This Roseiflexus castenholzii (strain DSM 13941 / HLO8) protein is ATP synthase subunit beta.